A 104-amino-acid polypeptide reads, in one-letter code: Larval cuticle protein 65Ab1 (104 aa).

An N-terminal signal peptide occupies residues 1–18 (MKFLIVFVALFAMAVARP). Residues 32 to 102 (PEKWSSDVET…PQGAHLPVAP (71 aa)) enclose the Chitin-binding type R&amp;R domain.

In terms of biological role, component of the cuticle of the larva. The polypeptide is Larval cuticle protein 65Ab1 (Drosophila melanogaster (Fruit fly)).